The sequence spans 510 residues: NADH-quinone oxidoreductase subunit N (510 aa).

Helical transmembrane passes span 14–34 (LLPE…DLFA), 42–62 (VIGW…IINM), 84–104 (AFKL…LSYL), 113–133 (GEYY…ASSA), 135–155 (LITL…LVGL), 170–190 (VVSG…VYGL), 208–228 (MAGY…GLAF), 247–267 (PTPV…ALIF), 286–306 (FFFE…MIIG), 323–343 (SGIA…SLFF), 346–366 (VIFY…VIMV), 390–410 (AIAM…VGFF), 426–446 (WLAA…FGII), and 466–486 (IWTF…FPGL).

It belongs to the complex I subunit 2 family. In terms of assembly, NDH-1 is composed of 14 different subunits. Subunits NuoA, H, J, K, L, M, N constitute the membrane sector of the complex.

Its subcellular location is the cell membrane. It carries out the reaction a quinone + NADH + 5 H(+)(in) = a quinol + NAD(+) + 4 H(+)(out). Its function is as follows. NDH-1 shuttles electrons from NADH, via FMN and iron-sulfur (Fe-S) centers, to quinones in the respiratory chain. The immediate electron acceptor for the enzyme in this species is believed to be a menaquinone. Couples the redox reaction to proton translocation (for every two electrons transferred, four hydrogen ions are translocated across the cytoplasmic membrane), and thus conserves the redox energy in a proton gradient. This Brevibacillus brevis (strain 47 / JCM 6285 / NBRC 100599) protein is NADH-quinone oxidoreductase subunit N.